The following is a 138-amino-acid chain: Basic phospholipase A2 homolog ammodytin L (138 aa).

The N-terminal stretch at 1–16 is a signal peptide; the sequence is MRILWIVAVCLIGVEG. 7 cysteine pairs are disulfide-bonded: cysteine 42–cysteine 131, cysteine 44–cysteine 60, cysteine 59–cysteine 111, cysteine 65–cysteine 138, cysteine 66–cysteine 104, cysteine 73–cysteine 97, and cysteine 91–cysteine 102. Residues 121 to 133 are important for membrane-damaging activities in eukaryotes and bacteria; heparin-binding; the sequence is KKYKVYLRFKCKG.

Belongs to the phospholipase A2 family. Group II subfamily. S49 sub-subfamily. In terms of tissue distribution, expressed by the venom gland.

It is found in the secreted. In terms of biological role, snake venom phospholipase A2 homolog that lacks enzymatic activity. Is very active in inducing myonecrosis in vivo and shows a potent calcium-independent membrane-damaging activity in vitro, most probably by binding and incorporating in the membrane. Also acts as a presynaptic neurotoxin. A model of myotoxic mechanism has been proposed: an apo Lys49-PLA2 is activated by the entrance of a hydrophobic molecule (e.g. fatty acid) at the hydrophobic channel of the protein leading to a reorientation of a monomer. This reorientation causes a transition between 'inactive' to 'active' states, causing alignment of C-terminal and membrane-docking sites (MDoS) side-by-side and putting the membrane-disruption sites (MDiS) in the same plane, exposed to solvent and in a symmetric position for both monomers. The MDoS region stabilizes the toxin on membrane by the interaction of charged residues with phospholipid head groups. Subsequently, the MDiS region destabilizes the membrane with penetration of hydrophobic residues. This insertion causes a disorganization of the membrane, allowing an uncontrolled influx of ions (i.e. calcium and sodium), and eventually triggering irreversible intracellular alterations and cell death. The chain is Basic phospholipase A2 homolog ammodytin L from Vipera ammodytes ammodytes (Western sand viper).